We begin with the raw amino-acid sequence, 266 residues long: 3-deoxy-manno-octulosonate cytidylyltransferase 1 (266 aa).

The protein belongs to the KdsB family.

It localises to the cytoplasm. The enzyme catalyses 3-deoxy-alpha-D-manno-oct-2-ulosonate + CTP = CMP-3-deoxy-beta-D-manno-octulosonate + diphosphate. It participates in nucleotide-sugar biosynthesis; CMP-3-deoxy-D-manno-octulosonate biosynthesis; CMP-3-deoxy-D-manno-octulosonate from 3-deoxy-D-manno-octulosonate and CTP: step 1/1. The protein operates within bacterial outer membrane biogenesis; lipopolysaccharide biosynthesis. Functionally, activates KDO (a required 8-carbon sugar) for incorporation into bacterial lipopolysaccharide in Gram-negative bacteria. This is 3-deoxy-manno-octulosonate cytidylyltransferase 1 from Paraburkholderia phytofirmans (strain DSM 17436 / LMG 22146 / PsJN) (Burkholderia phytofirmans).